The primary structure comprises 117 residues: MDKKSARIRRAARARHMMREQGVTRLVIHRTPRHIYAQVIAPNGSEVLAAASTVEKAIREQVKYTGNKDAAAAVGKAVAERALAKGVQAVAFDRSGFKYHGRVQTLADAAREAGLQF.

Belongs to the universal ribosomal protein uL18 family. Part of the 50S ribosomal subunit; part of the 5S rRNA/L5/L18/L25 subcomplex. Contacts the 5S and 23S rRNAs.

In terms of biological role, this is one of the proteins that bind and probably mediate the attachment of the 5S RNA into the large ribosomal subunit, where it forms part of the central protuberance. The sequence is that of Large ribosomal subunit protein uL18 from Haemophilus influenzae (strain 86-028NP).